We begin with the raw amino-acid sequence, 198 residues long: Cytochrome c oxidase assembly protein CtaG (198 aa).

At 1–12 (MADTGQSDRKER) the chain is on the cytoplasmic side. The chain crosses the membrane as a helical; Signal-anchor for type II membrane protein span at residues 13 to 35 (SNGVIVGTCLAFVVGMVGMAYAA). At 36 to 198 (VPLYDMFCRV…QVKSRTENKL (163 aa)) the chain is on the periplasmic side.

This sequence belongs to the COX11/CtaG family.

It is found in the cell inner membrane. Its function is as follows. Exerts its effect at some terminal stage of cytochrome c oxidase synthesis, probably by being involved in the insertion of the copper B into subunit I. The protein is Cytochrome c oxidase assembly protein CtaG of Sinorhizobium medicae (strain WSM419) (Ensifer medicae).